The sequence spans 430 residues: Aspartate aminotransferase, mitochondrial (430 aa).

The N-terminal 29 residues, 1–29 (MALLHSGRVLPGIAAAFHPGLAAAASARA), are a transit peptide targeting the mitochondrion. A Phosphothreonine modification is found at threonine 48. Residue lysine 59 is modified to N6-acetyllysine. Glycine 65 lines the substrate pocket. At lysine 73 the chain carries N6-acetyllysine; alternate. Position 73 is an N6-succinyllysine; alternate (lysine 73). Lysine 82 carries the N6-acetyllysine modification. An N6-acetyllysine; alternate modification is found at lysine 90. Lysine 90 bears the N6-succinyllysine; alternate mark. Residue tyrosine 96 is modified to 3'-nitrotyrosine; alternate. Tyrosine 96 is modified (phosphotyrosine; alternate). Lysine 107 and lysine 122 each carry N6-acetyllysine; alternate. N6-succinyllysine; alternate occurs at positions 107 and 122. Serine 143 is subject to Phosphoserine. The residue at position 159 (lysine 159) is an N6-acetyllysine; alternate. Residue lysine 159 is modified to N6-succinyllysine; alternate. A substrate-binding site is contributed by tryptophan 162. The residue at position 185 (lysine 185) is an N6-acetyllysine; alternate. N6-succinyllysine; alternate is present on lysine 185. Asparagine 215 contributes to the substrate binding site. An N6-succinyllysine modification is found at lysine 227. Position 234 is an N6-acetyllysine (lysine 234). An N6-acetyllysine; alternate mark is found at lysine 279 and lysine 296. At lysine 279 the chain carries N6-(pyridoxal phosphate)lysine; alternate. Lysine 296 carries the post-translational modification N6-succinyllysine; alternate. Lysine 302 carries the N6-acetyllysine modification. Lysine 309 bears the N6-acetyllysine; alternate mark. Position 309 is an N6-succinyllysine; alternate (lysine 309). Position 313 is an asymmetric dimethylarginine (arginine 313). Threonine 333 is modified (phosphothreonine). Lysine 338 is subject to N6-acetyllysine; alternate. An N6-succinyllysine; alternate modification is found at lysine 338. An N6-acetyllysine modification is found at lysine 345. Position 363 is an N6-acetyllysine; alternate (lysine 363). Lysine 363 carries the N6-succinyllysine; alternate modification. 2 positions are modified to N6-acetyllysine: lysine 364 and lysine 387. Lysine 396 and lysine 404 each carry N6-acetyllysine; alternate. N6-succinyllysine; alternate is present on residues lysine 396 and lysine 404. Arginine 407 contributes to the substrate binding site.

This sequence belongs to the class-I pyridoxal-phosphate-dependent aminotransferase family. As to quaternary structure, homodimer. Pyridoxal 5'-phosphate serves as cofactor.

It localises to the mitochondrion matrix. It is found in the cell membrane. It catalyses the reaction L-aspartate + 2-oxoglutarate = oxaloacetate + L-glutamate. It carries out the reaction L-kynurenine + 2-oxoglutarate = kynurenate + L-glutamate + H2O. Its function is as follows. Catalyzes the irreversible transamination of the L-tryptophan metabolite L-kynurenine to form kynurenic acid (KA). As a member of the malate-aspartate shuttle, it has a key role in the intracellular NAD(H) redox balance. Is important for metabolite exchange between mitochondria and cytosol, and for amino acid metabolism. Facilitates cellular uptake of long-chain free fatty acids. This Homo sapiens (Human) protein is Aspartate aminotransferase, mitochondrial.